A 248-amino-acid polypeptide reads, in one-letter code: 4-hydroxy-tetrahydrodipicolinate reductase (248 aa).

NAD(+) contacts are provided by residues 9-14, 77-79, and 104-107; these read GAKGRV, GTT, and APNF. His134 serves as the catalytic Proton donor/acceptor. Residue His135 participates in (S)-2,3,4,5-tetrahydrodipicolinate binding. Catalysis depends on Lys138, which acts as the Proton donor. (S)-2,3,4,5-tetrahydrodipicolinate is bound at residue 144–145; the sequence is GT.

The protein belongs to the DapB family.

It is found in the cytoplasm. The enzyme catalyses (S)-2,3,4,5-tetrahydrodipicolinate + NAD(+) + H2O = (2S,4S)-4-hydroxy-2,3,4,5-tetrahydrodipicolinate + NADH + H(+). It carries out the reaction (S)-2,3,4,5-tetrahydrodipicolinate + NADP(+) + H2O = (2S,4S)-4-hydroxy-2,3,4,5-tetrahydrodipicolinate + NADPH + H(+). Its pathway is amino-acid biosynthesis; L-lysine biosynthesis via DAP pathway; (S)-tetrahydrodipicolinate from L-aspartate: step 4/4. Catalyzes the conversion of 4-hydroxy-tetrahydrodipicolinate (HTPA) to tetrahydrodipicolinate. The chain is 4-hydroxy-tetrahydrodipicolinate reductase from Corynebacterium aurimucosum (strain ATCC 700975 / DSM 44827 / CIP 107346 / CN-1) (Corynebacterium nigricans).